We begin with the raw amino-acid sequence, 222 residues long: Peptide methionine sulfoxide reductase MsrA (222 aa).

C55 is an active-site residue.

It belongs to the MsrA Met sulfoxide reductase family.

The enzyme catalyses L-methionyl-[protein] + [thioredoxin]-disulfide + H2O = L-methionyl-(S)-S-oxide-[protein] + [thioredoxin]-dithiol. It catalyses the reaction [thioredoxin]-disulfide + L-methionine + H2O = L-methionine (S)-S-oxide + [thioredoxin]-dithiol. In terms of biological role, has an important function as a repair enzyme for proteins that have been inactivated by oxidation. Catalyzes the reversible oxidation-reduction of methionine sulfoxide in proteins to methionine. This chain is Peptide methionine sulfoxide reductase MsrA, found in Streptomyces griseus subsp. griseus (strain JCM 4626 / CBS 651.72 / NBRC 13350 / KCC S-0626 / ISP 5235).